A 178-amino-acid polypeptide reads, in one-letter code: Large ribosomal subunit protein uL6 (178 aa).

Belongs to the universal ribosomal protein uL6 family. In terms of assembly, part of the 50S ribosomal subunit.

In terms of biological role, this protein binds to the 23S rRNA, and is important in its secondary structure. It is located near the subunit interface in the base of the L7/L12 stalk, and near the tRNA binding site of the peptidyltransferase center. This is Large ribosomal subunit protein uL6 from Corynebacterium kroppenstedtii (strain DSM 44385 / JCM 11950 / CIP 105744 / CCUG 35717).